A 172-amino-acid polypeptide reads, in one-letter code: Shikimate kinase (172 aa).

8–15 (GARASGKT) is a binding site for ATP.

Belongs to the shikimate kinase family.

The protein localises to the cytoplasm. It catalyses the reaction shikimate + ATP = 3-phosphoshikimate + ADP + H(+). It functions in the pathway metabolic intermediate biosynthesis; chorismate biosynthesis; chorismate from D-erythrose 4-phosphate and phosphoenolpyruvate: step 5/7. The protein is Shikimate kinase of Oleidesulfovibrio alaskensis (strain ATCC BAA-1058 / DSM 17464 / G20) (Desulfovibrio alaskensis).